Consider the following 370-residue polypeptide: Protein RecA (370 aa).

Residues 1–20 (MSFEERRKKDSKESSSKEKD) form a disordered region. Residue 78 to 85 (GPESSGKT) participates in ATP binding.

It belongs to the RecA family.

It is found in the cytoplasm. Its function is as follows. Can catalyze the hydrolysis of ATP in the presence of single-stranded DNA, the ATP-dependent uptake of single-stranded DNA by duplex DNA, and the ATP-dependent hybridization of homologous single-stranded DNAs. It interacts with LexA causing its activation and leading to its autocatalytic cleavage. The polypeptide is Protein RecA (Prochlorococcus marinus (strain MIT 9515)).